A 255-amino-acid polypeptide reads, in one-letter code: MATIGALLLRFFFIAVLMSSQKSWAIKEEHTIIQAEFYLLPDKRGEYMFDFDGDEIFHVDIEKSETIWRLEEFAKFASFEAQGALANIAVDKANLDVMKKRSNNTPDANVAPEVTVLSRSPVNLGEPNILVCFIDKFSPPVVNVTWLRNGQPVTEGVSETVFLPRDDHLFRKFHYLTFLPSTDDFYDCEVDHWGLEEPLRKHWEFEEKTLLPETKENVVCALGLFVGLVGIVVGIILIMKGIKKRNVVERRQGAL.

The N-terminal stretch at M1–A25 is a signal peptide. Residues I26–N109 form an alpha-1 region. Residues I26–N217 lie on the Extracellular side of the membrane. The tract at residues V110–W203 is alpha-2. Residues P112 to E204 enclose the Ig-like C1-type domain. A disulfide bridge connects residues C132 and C188. N143 carries N-linked (GlcNAc...) asparagine glycosylation. Residues E204–E216 are connecting peptide. A helical transmembrane segment spans residues V218–I238. Residues M239 to L255 lie on the Cytoplasmic side of the membrane.

Belongs to the MHC class II family.

The protein resides in the membrane. The sequence is that of H-2 class II histocompatibility antigen, E-U alpha chain (H2-Ea) from Mus musculus (Mouse).